The sequence spans 134 residues: ATP synthase epsilon chain (134 aa).

This sequence belongs to the ATPase epsilon chain family. F-type ATPases have 2 components, CF(1) - the catalytic core - and CF(0) - the membrane proton channel. CF(1) has five subunits: alpha(3), beta(3), gamma(1), delta(1), epsilon(1). CF(0) has three main subunits: a, b and c.

Its subcellular location is the cell membrane. Its function is as follows. Produces ATP from ADP in the presence of a proton gradient across the membrane. The polypeptide is ATP synthase epsilon chain (Alkaliphilus metalliredigens (strain QYMF)).